The primary structure comprises 454 residues: UPF0210 protein Mhun_2657 (454 aa).

This sequence belongs to the UPF0210 family.

This chain is UPF0210 protein Mhun_2657, found in Methanospirillum hungatei JF-1 (strain ATCC 27890 / DSM 864 / NBRC 100397 / JF-1).